The chain runs to 78 residues: ATP synthase subunit a (78 aa).

Residues 34–54 (LTNIGLYLTIGIFLILTYSLL) traverse the membrane as a helical segment.

The protein belongs to the ATPase A chain family. F-type ATPases have 2 components, CF(1) - the catalytic core - and CF(0) - the membrane proton channel. CF(1) has five subunits: alpha(3), beta(3), gamma(1), delta(1), epsilon(1). CF(0) has three main subunits: a, b and c.

The protein resides in the mitochondrion inner membrane. In terms of biological role, mitochondrial membrane ATP synthase (F(1)F(0) ATP synthase or Complex V) produces ATP from ADP in the presence of a proton gradient across the membrane which is generated by electron transport complexes of the respiratory chain. F-type ATPases consist of two structural domains, F(1) - containing the extramembraneous catalytic core and F(0) - containing the membrane proton channel, linked together by a central stalk and a peripheral stalk. During catalysis, ATP synthesis in the catalytic domain of F(1) is coupled via a rotary mechanism of the central stalk subunits to proton translocation. Key component of the proton channel; it may play a direct role in the translocation of protons across the membrane. The sequence is that of ATP synthase subunit a (atp6) from Aspergillus amstelodami.